Consider the following 153-residue polypeptide: Protein-export protein SecB (153 aa).

This sequence belongs to the SecB family. Homotetramer, a dimer of dimers. One homotetramer interacts with 1 SecA dimer.

The protein localises to the cytoplasm. Its function is as follows. One of the proteins required for the normal export of preproteins out of the cell cytoplasm. It is a molecular chaperone that binds to a subset of precursor proteins, maintaining them in a translocation-competent state. It also specifically binds to its receptor SecA. This Erwinia tasmaniensis (strain DSM 17950 / CFBP 7177 / CIP 109463 / NCPPB 4357 / Et1/99) protein is Protein-export protein SecB.